A 159-amino-acid polypeptide reads, in one-letter code: Bacterioferritin (159 aa).

Residues 1 to 145 (MQGDPDVLRL…TQLELMDKLG (145 aa)) enclose the Ferritin-like diiron domain. Positions 18 and 51 each coordinate Fe cation. M52 contributes to the heme b binding site. The Fe cation site is built by H54, E94, E127, and H130.

The protein belongs to the bacterioferritin family. Homooligomer of 24 subunits, arranged as 12 dimers, that are packed together to form an approximately spherical molecule with a central cavity, in which large amounts of iron can be deposited. The cofactor is heme b.

The enzyme catalyses 4 Fe(2+) + O2 + 4 H(+) = 4 Fe(3+) + 2 H2O. It catalyses the reaction Fe(2+)(in) = Fe(2+)(out). Its function is as follows. Iron-storage protein, whose ferroxidase center binds Fe(2+), oxidizes it using dioxygen to Fe(3+), and participates in the subsequent Fe(3+) oxide mineral core formation within the central cavity of the BFR protein shell. The chain is Bacterioferritin (bfr) from Mycobacterium bovis (strain ATCC BAA-935 / AF2122/97).